The primary structure comprises 332 residues: SLAM family member 6 (332 aa).

The first 21 residues, 1-21 (MLWLFQSLLFVFCFGPGNVVS), serve as a signal peptide directing secretion. Residues 22–226 (QSSLTPLMVN…VKIQYTDTKM (205 aa)) are Extracellular-facing. Residues 35–120 (GESVTLPLEF…ISTKTSAKLS (86 aa)) enclose the Ig-like V-type domain. 7 N-linked (GlcNAc...) asparagine glycosylation sites follow: asparagine 58, asparagine 87, asparagine 137, asparagine 144, asparagine 161, asparagine 178, and asparagine 203. One can recognise an Ig-like C2-type domain in the interval 132–209 (NIQVTNHSQL…AVSNLSFSVS (78 aa)). Cystine bridges form between cysteine 147-cysteine 214 and cysteine 153-cysteine 195. A helical transmembrane segment spans residues 227-247 (ILFMVSGICIVFGFIILLLLV). At 248–331 (LRKRRDSLSL…FSRATALDNV (84 aa)) the chain is on the cytoplasmic side. Tyrosine 274 carries the phosphotyrosine modification. Serine 278 carries the post-translational modification Phosphoserine. 2 consecutive short sequence motifs (ITSM) follow at residues 283 to 288 (TVYASV) and 307 to 312 (TIYSTI). Residue tyrosine 309 is modified to Phosphotyrosine.

As to quaternary structure, homodimer. Interacts with PTN6. Interacts (phosphorylated) with PTN11. Interacts (phosphorylated on tyrosine residues) with SH2D1A/SAP and SH2D1B/EAT2; SH2D1A and SH2D1B can associate with the same SLAMF6 molecule; interaction with SH2D1B is mediated by ITSM 2. Post-translationally, phosphorylation in NK cells upon engagment by SLAMF6-expressing target cells is leading to receptor activation. As to expression, expressed by all (resting and activated) natural killer cells (NK), T- and B-lymphocytes. Increased surface expression on T-cells of systemic lupus erythematosus (SLE) patients.

Its subcellular location is the cell membrane. Self-ligand receptor of the signaling lymphocytic activation molecule (SLAM) family. SLAM receptors triggered by homo- or heterotypic cell-cell interactions are modulating the activation and differentiation of a wide variety of immune cells and thus are involved in the regulation and interconnection of both innate and adaptive immune response. Activities are controlled by presence or absence of small cytoplasmic adapter proteins, SH2D1A/SAP and/or SH2D1B/EAT-2. Triggers cytolytic activity only in natural killer cells (NK) expressing high surface densities of natural cytotoxicity receptors. Positive signaling in NK cells implicates phosphorylation of VAV1. NK cell activation seems to depend on SH2D1B and not on SH2D1A. In conjunction with SLAMF1 controls the transition between positive selection and the subsequent expansion and differentiation of the thymocytic natural killer T (NKT) cell lineage. Promotes T-cell differentiation into a helper T-cell Th17 phenotype leading to increased IL-17 secretion; the costimulatory activity requires SH2D1A. Promotes recruitment of RORC to the IL-17 promoter. In conjunction with SLAMF1 and CD84/SLAMF5 may be a negative regulator of the humoral immune response. In the absence of SH2D1A/SAP can transmit negative signals to CD4(+) T-cells and NKT cells. Negatively regulates germinal center formation by inhibiting T-cell:B-cell adhesion; the function probably implicates increased association with PTPN6/SHP-1 via ITSMs in absence of SH2D1A/SAP. However, reported to be involved in maintaining B-cell tolerance in germinal centers and in preventing autoimmunity. The chain is SLAM family member 6 (SLAMF6) from Homo sapiens (Human).